A 569-amino-acid polypeptide reads, in one-letter code: Proline--tRNA ligase (569 aa).

Belongs to the class-II aminoacyl-tRNA synthetase family. ProS type 1 subfamily. As to quaternary structure, homodimer.

The protein localises to the cytoplasm. The catalysed reaction is tRNA(Pro) + L-proline + ATP = L-prolyl-tRNA(Pro) + AMP + diphosphate. In terms of biological role, catalyzes the attachment of proline to tRNA(Pro) in a two-step reaction: proline is first activated by ATP to form Pro-AMP and then transferred to the acceptor end of tRNA(Pro). As ProRS can inadvertently accommodate and process non-cognate amino acids such as alanine and cysteine, to avoid such errors it has two additional distinct editing activities against alanine. One activity is designated as 'pretransfer' editing and involves the tRNA(Pro)-independent hydrolysis of activated Ala-AMP. The other activity is designated 'posttransfer' editing and involves deacylation of mischarged Ala-tRNA(Pro). The misacylated Cys-tRNA(Pro) is not edited by ProRS. This is Proline--tRNA ligase from Colwellia psychrerythraea (strain 34H / ATCC BAA-681) (Vibrio psychroerythus).